A 140-amino-acid chain; its full sequence is Putative nickel-responsive regulator (140 aa).

His-81, His-92, His-94, and Cys-100 together coordinate Ni(2+).

Belongs to the transcriptional regulatory CopG/NikR family. It depends on Ni(2+) as a cofactor.

In terms of biological role, transcriptional regulator. The protein is Putative nickel-responsive regulator of Methanocella arvoryzae (strain DSM 22066 / NBRC 105507 / MRE50).